The sequence spans 51 residues: MQQPQNITTSSISNNNNNNTSLTLQQQQEQLQQLQIKRKRNLMKQLQHVSH.

The segment at 1-28 is disordered; sequence MQQPQNITTSSISNNNNNNTSLTLQQQQ. Residues 13–47 adopt a coiled-coil conformation; it reads SNNNNNNTSLTLQQQQEQLQQLQIKRKRNLMKQLQ.

This is an uncharacterized protein from Dictyostelium discoideum (Social amoeba).